The sequence spans 432 residues: Transcriptional adapter 3 (432 aa).

A Glycyl lysine isopeptide (Lys-Gly) (interchain with G-Cter in SUMO2) cross-link involves residue K21. The stretch at 40-69 forms a coiled coil; sequence IEELDTLQLELETLLSSASRRLRVLEAETQ. Positions 87–127 are disordered; the sequence is ARDHELGAPPKHGKPKKQKLEGKTGHGPGPGPGRPKSKNVQ. Residue K129 forms a Glycyl lysine isopeptide (Lys-Gly) (interchain with G-Cter in SUMO2) linkage. Positions 272–319 are disordered; that stretch reads NIISPMEDSPIPDMSGKESGADGASTSPRNQNKPFSVPHTKSLESRIK. 2 positions are modified to phosphoserine: S280 and S298. Polar residues predominate over residues 295–305; that stretch reads ASTSPRNQNKP. A coiled-coil region spans residues 367 to 407; sequence LLRLAKEEVSRQELRQRVRMADNEVMDAFRKIMAARQKKRT. K418 carries the N6-acetyllysine modification.

Belongs to the NGG1 family. As to quaternary structure, the PCAF complex is composed of a number of TBP-associated factors (TAFS), such as TAF5, TAF5L, TAF6, TAF6L, TAF9, TAF10 and TAF12, PCAF, and also PCAF-associated factors (PAFs), such as TADA2L/ADA2, TADA3L/ADA3 and SPT3. Interacts directly with TADA2L and PCAF and also with the high-risk HPV oncoprotein E6. Component of the STAGA transcription coactivator-HAT complex, at least composed of SUPT3H, GCN5L2, TAF5L, TAF6L, SUPT7L, TADA3L, TAD1L, TAF10, TAF12, TRRAP and TAF9. Component of the TFTC-HAT complex. Component of the ADA2A-containing complex (ATAC), composed of KAT14, KAT2A, TADA2L, TADA3L, ZZ3, MBIP, WDR5, YEATS2, CCDC101 and DR1.

The protein localises to the nucleus. Functionally, functions as a component of the PCAF complex. The PCAF complex is capable of efficiently acetylating histones in a nucleosomal context. The PCAF complex could be considered as the human version of the yeast SAGA complex. Also known as a coactivator for p53/TP53-dependent transcriptional activation. Component of the ATAC complex, a complex with histone acetyltransferase activity on histones H3 and H4. This Rattus norvegicus (Rat) protein is Transcriptional adapter 3 (Tada3).